A 701-amino-acid polypeptide reads, in one-letter code: Polyphosphate kinase (701 aa).

ATP is bound at residue N45. Residues R373 and R403 each coordinate Mg(2+). Residues 428–462 form the PLD phosphodiesterase 1 domain; sequence PGMKIHAKLLLITRKEGDEFVRYAHIGTGNFHERT. H433 (phosphohistidine intermediate) is an active-site residue. The ATP site is built by Y466, R562, and H590. In terms of domain architecture, PLD phosphodiesterase 2 spans 585–615; it reads DRFLEHPRVLVVHNDGNPQVFISSADWMERN.

Belongs to the polyphosphate kinase 1 (PPK1) family. The cofactor is Mg(2+). In terms of processing, an intermediate of this reaction is the autophosphorylated ppk in which a phosphate is covalently linked to a histidine residue through a N-P bond.

It carries out the reaction [phosphate](n) + ATP = [phosphate](n+1) + ADP. Catalyzes the reversible transfer of the terminal phosphate of ATP to form a long-chain polyphosphate (polyP). The polypeptide is Polyphosphate kinase (Vibrio cholerae serotype O1 (strain ATCC 39315 / El Tor Inaba N16961)).